Reading from the N-terminus, the 575-residue chain is Urease subunit alpha (575 aa).

The 439-residue stretch at 137 to 575 (GGIDSHIHWI…LPMAQRYFLF (439 aa)) folds into the Urease domain. Ni(2+) contacts are provided by histidine 142, histidine 144, and lysine 225. Lysine 225 carries the post-translational modification N6-carboxylysine. Residue histidine 227 coordinates substrate. Ni(2+) is bound by residues histidine 254 and histidine 280. Catalysis depends on histidine 328, which acts as the Proton donor. Residue aspartate 368 participates in Ni(2+) binding.

It belongs to the metallo-dependent hydrolases superfamily. Urease alpha subunit family. As to quaternary structure, heterotrimer of UreA (gamma), UreB (beta) and UreC (alpha) subunits. Three heterotrimers associate to form the active enzyme. Ni cation is required as a cofactor. Post-translationally, carboxylation allows a single lysine to coordinate two nickel ions.

The protein localises to the cytoplasm. It catalyses the reaction urea + 2 H2O + H(+) = hydrogencarbonate + 2 NH4(+). It functions in the pathway nitrogen metabolism; urea degradation; CO(2) and NH(3) from urea (urease route): step 1/1. The protein is Urease subunit alpha of Leptothrix cholodnii (strain ATCC 51168 / LMG 8142 / SP-6) (Leptothrix discophora (strain SP-6)).